The sequence spans 217 residues: Pyridoxine/pyridoxamine 5'-phosphate oxidase (217 aa).

Substrate is bound by residues 13 to 16 (RRDY) and Lys71. FMN-binding positions include 66–71 (RIVLLK), 81–82 (YT), Lys88, and Gln110. Residues Tyr128, Arg132, and Ser136 each coordinate substrate. FMN contacts are provided by residues 145-146 (QS) and Trp190. A substrate-binding site is contributed by 196-198 (RLH). An FMN-binding site is contributed by Arg200.

This sequence belongs to the pyridoxamine 5'-phosphate oxidase family. As to quaternary structure, homodimer. FMN is required as a cofactor.

The catalysed reaction is pyridoxamine 5'-phosphate + O2 + H2O = pyridoxal 5'-phosphate + H2O2 + NH4(+). It carries out the reaction pyridoxine 5'-phosphate + O2 = pyridoxal 5'-phosphate + H2O2. It functions in the pathway cofactor metabolism; pyridoxal 5'-phosphate salvage; pyridoxal 5'-phosphate from pyridoxamine 5'-phosphate: step 1/1. The protein operates within cofactor metabolism; pyridoxal 5'-phosphate salvage; pyridoxal 5'-phosphate from pyridoxine 5'-phosphate: step 1/1. Its function is as follows. Catalyzes the oxidation of either pyridoxine 5'-phosphate (PNP) or pyridoxamine 5'-phosphate (PMP) into pyridoxal 5'-phosphate (PLP). This is Pyridoxine/pyridoxamine 5'-phosphate oxidase from Edwardsiella ictaluri (strain 93-146).